A 517-amino-acid polypeptide reads, in one-letter code: Acetylcholine receptor subunit delta (517 aa).

Residues 1–21 form the signal peptide; that stretch reads MAGPVPTLGLLAALVVCGSWG. The Extracellular segment spans residues 22 to 245; that stretch reads LNEEQRLIQH…VTFYLIIRRK (224 aa). Residues Asn-97, Asn-164, and Asn-190 are each glycosylated (N-linked (GlcNAc...) asparagine). Cys-151 and Cys-165 are oxidised to a cystine. The next 3 helical transmembrane spans lie at 246-270, 278-296, and 312-333; these read PLFYIINILVPCVLISFMINLVFYL, TSVAISVLLAQSVFLLLIS, and FLLFGMVLVTMVVVICVIVLNI. Topologically, residues 334–471 are cytoplasmic; it reads HFRTPSTHVL…WNQVARTVDR (138 aa). At Tyr-390 the chain carries Phosphotyrosine; by Tyr-kinases. Residues 472–490 traverse the membrane as a helical segment; it reads LCLFVVTPVMVVGTAWIFL.

It belongs to the ligand-gated ion channel (TC 1.A.9) family. Acetylcholine receptor (TC 1.A.9.1) subfamily. Delta/CHRND sub-subfamily. In terms of assembly, pentamer of two alpha chains, and one each of the beta, delta, and gamma (in immature muscle) or epsilon (in mature muscle) chains. The muscle heteropentamer composed of alpha-1, beta-1, delta, epsilon subunits interacts with the alpha-conotoxin ImII.

The protein resides in the postsynaptic cell membrane. It localises to the cell membrane. The catalysed reaction is K(+)(in) = K(+)(out). It catalyses the reaction Na(+)(in) = Na(+)(out). Functionally, after binding acetylcholine, the AChR responds by an extensive change in conformation that affects all subunits and leads to opening of an ion-conducting channel across the plasma membrane. The chain is Acetylcholine receptor subunit delta (Chrnd) from Rattus norvegicus (Rat).